A 282-amino-acid chain; its full sequence is MMMLPEACIANILAFTSPADAFSSSEVSSVFRLAGDSDFVWEKFLPSDYKSLISQSTDHHWNISSKKEIYRCLCDSLLIDNARKLFKINKFSGKISYVLSARDISITHSDHASYWSWSNVSDSRFSESAELIITDRLEIEGKIQTRVLSANTRYGAYLIVKVTKGAYGLDLVPAETSIKSKNGQISKSATYLCCLDEKKQQMKRLFYGNREERMAMTVEAVGGDGKRREPKCRDDGWMEIELGEFETREGEDDEVNMTLTEVKGYQLKGGILIDGIEVRPKT.

An F-box domain is found at 1 to 44 (MMMLPEACIANILAFTSPADAFSSSEVSSVFRLAGDSDFVWEKF).

As to quaternary structure, component of SCF(VBF) E3 ubiquitin ligase complex that interacts with VIP1. Interacts directly with SKP1A and VIP1. Forms a complex composed of VIP1, VBF and Agrobacterium virE2.

Functionally, component of SCF(VBF) E3 ubiquitin ligase complexes, which mediate the ubiquitination and subsequent proteasomal degradation of target proteins such as VIP1 and Agrobacterium virE2, after their implication in T-DNA translocation to the host nucleus (can functionally replace Agrobacterium VirF). Required during Agrobacterium-induced tumor formation. This Arabidopsis thaliana (Mouse-ear cress) protein is F-box protein VBF (VBF).